Consider the following 205-residue polypeptide: Suppressor of silencing 2b (205 aa).

The tract at residues Ser23 to Val52 is disordered.

This sequence belongs to the cucumovirus/ilarvirus protein 2b family.

Its subcellular location is the host nucleus. In terms of biological role, acts as a suppressor of RNA-mediated gene silencing, also known as post-transcriptional gene silencing (PTGS), a mechanism of plant viral defense that limits the accumulation of viral RNAs. May directly interfere with the mobile silencing signal. The chain is Suppressor of silencing 2b from Tobacco streak virus (strain WC) (TSV).